The following is a 625-amino-acid chain: Arginine--tRNA ligase (625 aa).

The short motif at 128–138 (VNPTKPLHMGH) is the 'HIGH' region element.

The protein belongs to the class-I aminoacyl-tRNA synthetase family.

Its subcellular location is the cytoplasm. The enzyme catalyses tRNA(Arg) + L-arginine + ATP = L-arginyl-tRNA(Arg) + AMP + diphosphate. This is Arginine--tRNA ligase (argS) from Pyrococcus abyssi (strain GE5 / Orsay).